Reading from the N-terminus, the 393-residue chain is NAD(P)H-quinone oxidoreductase subunit H, chloroplastic (393 aa).

The protein belongs to the complex I 49 kDa subunit family. In terms of assembly, NDH is composed of at least 16 different subunits, 5 of which are encoded in the nucleus.

It localises to the plastid. The protein resides in the chloroplast thylakoid membrane. It carries out the reaction a plastoquinone + NADH + (n+1) H(+)(in) = a plastoquinol + NAD(+) + n H(+)(out). The enzyme catalyses a plastoquinone + NADPH + (n+1) H(+)(in) = a plastoquinol + NADP(+) + n H(+)(out). In terms of biological role, NDH shuttles electrons from NAD(P)H:plastoquinone, via FMN and iron-sulfur (Fe-S) centers, to quinones in the photosynthetic chain and possibly in a chloroplast respiratory chain. The immediate electron acceptor for the enzyme in this species is believed to be plastoquinone. Couples the redox reaction to proton translocation, and thus conserves the redox energy in a proton gradient. The chain is NAD(P)H-quinone oxidoreductase subunit H, chloroplastic from Trifolium subterraneum (Subterranean clover).